Here is a 306-residue protein sequence, read N- to C-terminus: Large ribosomal subunit protein mL45 (306 aa).

Residues 287 to 306 are disordered; sequence LKPEEEYEEAQGEAQKPQLA.

Belongs to the mitochondrion-specific ribosomal protein mL45 family. Component of the mitochondrial large ribosomal subunit (mt-LSU). Mature mammalian 55S mitochondrial ribosomes consist of a small (28S) and a large (39S) subunit. The 28S small subunit contains a 12S ribosomal RNA (12S mt-rRNA) and 30 different proteins. The 39S large subunit contains a 16S rRNA (16S mt-rRNA), a copy of mitochondrial valine transfer RNA (mt-tRNA(Val)), which plays an integral structural role, and 52 different proteins.

It localises to the mitochondrion. Component of the mitochondrial large ribosomal subunit (mt-LSU). Within the mitochondrial ribosomes, required to direct the nascent polypeptide toward the tunnel exit and position the exit at a distance from the membrane surface. In Homo sapiens (Human), this protein is Large ribosomal subunit protein mL45.